The sequence spans 123 residues: Phosphoribosyl-AMP cyclohydrolase (123 aa).

D73 serves as a coordination point for Mg(2+). C74 provides a ligand contact to Zn(2+). Mg(2+) contacts are provided by D75 and D77. Zn(2+) is bound by residues C90 and C97.

Belongs to the PRA-CH family. As to quaternary structure, homodimer. The cofactor is Mg(2+). Requires Zn(2+) as cofactor.

The protein localises to the cytoplasm. The catalysed reaction is 1-(5-phospho-beta-D-ribosyl)-5'-AMP + H2O = 1-(5-phospho-beta-D-ribosyl)-5-[(5-phospho-beta-D-ribosylamino)methylideneamino]imidazole-4-carboxamide. It functions in the pathway amino-acid biosynthesis; L-histidine biosynthesis; L-histidine from 5-phospho-alpha-D-ribose 1-diphosphate: step 3/9. Functionally, catalyzes the hydrolysis of the adenine ring of phosphoribosyl-AMP. This Methanoregula boonei (strain DSM 21154 / JCM 14090 / 6A8) protein is Phosphoribosyl-AMP cyclohydrolase.